Reading from the N-terminus, the 808-residue chain is Dynamin-like protein B (808 aa).

The region spanning 43–340 (FIETPEFVFI…TWRKYLDSVP (298 aa)) is the Dynamin-type G domain. Positions 53 to 60 (GKDGNGKS) are G1 motif. Residue 53-60 (GKDGNGKS) coordinates GTP. Positions 79–80 (LR) are G2 motif. Residues 150–153 (EPPS) are G3 motif. Residues 150 to 154 (EPPSV) and 239 to 242 (NKFH) contribute to the GTP site. The tract at residues 239–242 (NKFH) is G4 motif. Residues 276 to 279 (PSTA) are G5 motif. Disordered stretches follow at residues 536 to 565 (SSFR…SSSI) and 665 to 695 (SLNN…NSNH). 2 stretches are compositionally biased toward low complexity: residues 552–565 (SSPS…SSSI) and 665–694 (SLNN…NNSN).

Belongs to the TRAFAC class dynamin-like GTPase superfamily. Dynamin/Fzo/YdjA family.

It localises to the cytoplasm. It carries out the reaction GTP + H2O = GDP + phosphate + H(+). Its function is as follows. Involved in cytokinesis. May hydrolyze GTP. The chain is Dynamin-like protein B (dlpB) from Dictyostelium discoideum (Social amoeba).